A 276-amino-acid polypeptide reads, in one-letter code: Putative pyruvate, phosphate dikinase regulatory protein 2 (276 aa).

146-153 provides a ligand contact to ADP; the sequence is GVSRTSKT.

This sequence belongs to the pyruvate, phosphate/water dikinase regulatory protein family. PDRP subfamily.

It carries out the reaction N(tele)-phospho-L-histidyl/L-threonyl-[pyruvate, phosphate dikinase] + ADP = N(tele)-phospho-L-histidyl/O-phospho-L-threonyl-[pyruvate, phosphate dikinase] + AMP + H(+). The enzyme catalyses N(tele)-phospho-L-histidyl/O-phospho-L-threonyl-[pyruvate, phosphate dikinase] + phosphate + H(+) = N(tele)-phospho-L-histidyl/L-threonyl-[pyruvate, phosphate dikinase] + diphosphate. Its function is as follows. Bifunctional serine/threonine kinase and phosphorylase involved in the regulation of the pyruvate, phosphate dikinase (PPDK) by catalyzing its phosphorylation/dephosphorylation. In Enterococcus faecalis (strain ATCC 700802 / V583), this protein is Putative pyruvate, phosphate dikinase regulatory protein 2.